Here is a 198-residue protein sequence, read N- to C-terminus: Cytochrome c oxidase assembly protein CtaG (198 aa).

Topologically, residues 1 to 12 (MADNGQADRKER) are cytoplasmic. The chain crosses the membrane as a helical; Signal-anchor for type II membrane protein span at residues 13 to 35 (SNGVIVGTCLAFVAGMIGMAYAA). Topologically, residues 36–198 (VPLYDMFCRV…QVKAKAENKL (163 aa)) are periplasmic.

Belongs to the COX11/CtaG family.

It is found in the cell inner membrane. In terms of biological role, exerts its effect at some terminal stage of cytochrome c oxidase synthesis, probably by being involved in the insertion of the copper B into subunit I. This chain is Cytochrome c oxidase assembly protein CtaG, found in Rhizobium meliloti (strain 1021) (Ensifer meliloti).